Reading from the N-terminus, the 511-residue chain is DEP domain-containing protein 7 (511 aa).

The region spanning 46 to 136 is the DEP domain; that stretch reads LQTQVEVKKR…SSCSLYRFTT (91 aa).

It belongs to the DEPDC7 family.

This Rattus norvegicus (Rat) protein is DEP domain-containing protein 7 (Depdc7).